A 322-amino-acid polypeptide reads, in one-letter code: Breast cancer metastasis-suppressor 1-like protein (322 aa).

Over residues 1 to 16 (MPVHSREKKESNHNDM) the composition is skewed to basic and acidic residues. The segment at 1-56 (MPVHSREKKESNHNDMEVDYPENEGTSSEEDDSDSSSGSEEGDSSEMDDEDCERRR) is disordered. Positions 17-51 (EVDYPENEGTSSEEDDSDSSSGSEEGDSSEMDDED) are enriched in acidic residues. 2 coiled-coil regions span residues 50-82 (EDCE…KERL) and 147-178 (EKLL…ITSE).

The protein belongs to the BRMS1 family.

It is found in the nucleus. Functionally, involved in the histone deacetylase (HDAC1)-dependent transcriptional repression activity. This chain is Breast cancer metastasis-suppressor 1-like protein (brms1l), found in Xenopus tropicalis (Western clawed frog).